The chain runs to 415 residues: Prostacyclin receptor (415 aa).

Residues 1-21 (MMASDGHPGPPSVTPGSPLSA) form a disordered region. Topologically, residues 1-44 (MMASDGHPGPPSVTPGSPLSAGGREWQGMAGSCWNITYVQDSVG) are extracellular. Disulfide bonds link Cys-33/Cys-193 and Cys-120/Cys-198. A glycan (N-linked (GlcNAc...) asparagine) is linked at Asn-35. Residues 45-66 (PATSTLMFVAGVVGNGLALGIL) form a helical membrane-spanning segment. Residues 67–79 (GARRRSHPSAFAV) lie on the Cytoplasmic side of the membrane. The helical transmembrane segment at 80-104 (LVTGLAVTDLLGTCFLSPAVFVAYA) threads the bilayer. Residues 105 to 122 (RNSSLLGLAHGGTMLCDT) are Extracellular-facing. A helical membrane pass occupies residues 123 to 143 (FAFAMTFFGLASTLILFAMAV). The Cytoplasmic portion of the chain corresponds to 144–162 (ERCLALSHPYLYAQLDGPR). The helical transmembrane segment at 163 to 186 (CARFALPSIYAFCCLFCSLPLLGL) threads the bilayer. At 187 to 215 (GEHQQYCPGSWCFIRMRSAQPGGCAFSLA) the chain is on the extracellular side. A helical transmembrane segment spans residues 216 to 236 (YASLMALLVTSIFFCNGSVTL). The Cytoplasmic portion of the chain corresponds to 237-263 (SLYHMYRQQRRHHGSFVPTSRAREDEV). A helical transmembrane segment spans residues 264-288 (YHLILLALMTVIMAVCSLPLMIRGF). At 289–301 (TQAIAPDSREMGD) the chain is on the extracellular side. The helical transmembrane segment at 302–322 (LLAFRFNAFNPILDPWVFILF) threads the bilayer. Topologically, residues 323 to 415 (RKAVFQRLKF…SEAIAACSLC (93 aa)) are cytoplasmic. A disordered region spans residues 349 to 370 (PLSRPASGRRDPPAPTSLQAKE). At Ser-365 the chain carries Phosphoserine. Cys-412 is modified (cysteine methyl ester). Cys-412 carries S-farnesyl cysteine lipidation. The propeptide at 413-415 (SLC) is removed in mature form.

It belongs to the G-protein coupled receptor 1 family. In terms of assembly, interacts (non-isoprenylated C-terminus) with PDZK1. Isoprenylation does not influence ligand binding but is required for efficient coupling to the effectors adenylyl cyclase and phospholipase C.

The protein localises to the cell membrane. Functionally, receptor for prostacyclin (prostaglandin I2 or PGI2). The activity of this receptor is mediated by G(s) proteins which activate adenylate cyclase. This Mus musculus (Mouse) protein is Prostacyclin receptor (Ptgir).